The following is a 442-amino-acid chain: Ribosomal protein uS12 methylthiotransferase RimO (442 aa).

In terms of domain architecture, MTTase N-terminal spans 8 to 118 (PKVGFVSLGC…VLGHVHKYVE (111 aa)). Residues cysteine 17, cysteine 53, cysteine 82, cysteine 150, cysteine 154, and cysteine 157 each contribute to the [4Fe-4S] cluster site. Residues 136–373 (LTPRHYAYLK…MELQQQVSIR (238 aa)) form the Radical SAM core domain. The TRAM domain occupies 376-442 (ARKVGKEMLV…EYDLWASLID (67 aa)).

This sequence belongs to the methylthiotransferase family. RimO subfamily. The cofactor is [4Fe-4S] cluster.

It localises to the cytoplasm. It carries out the reaction L-aspartate(89)-[ribosomal protein uS12]-hydrogen + (sulfur carrier)-SH + AH2 + 2 S-adenosyl-L-methionine = 3-methylsulfanyl-L-aspartate(89)-[ribosomal protein uS12]-hydrogen + (sulfur carrier)-H + 5'-deoxyadenosine + L-methionine + A + S-adenosyl-L-homocysteine + 2 H(+). Its function is as follows. Catalyzes the methylthiolation of an aspartic acid residue of ribosomal protein uS12. The protein is Ribosomal protein uS12 methylthiotransferase RimO of Aeromonas hydrophila subsp. hydrophila (strain ATCC 7966 / DSM 30187 / BCRC 13018 / CCUG 14551 / JCM 1027 / KCTC 2358 / NCIMB 9240 / NCTC 8049).